Reading from the N-terminus, the 1462-residue chain is Copper-transporting ATPase 2 (1462 aa).

A disordered region spans residues 1 to 23 (MDPRKNLASVGTMPEQERQVTAK). Over 1–655 (MDPRKNLASV…KTEIKQWKKS (655 aa)) the chain is Cytoplasmic. 4 consecutive HMA domains span residues 68-134 (ATDV…FEAS), 153-219 (AVVK…FEAA), 267-333 (ATLP…PGHF), and 361-427 (RTAV…FEVS). Cys-79, Cys-82, Cys-164, Cys-167, Cys-278, and Cys-281 together coordinate Cu(+). The interval 333-361 (FKVSLPDGVEENEPQSGSSQRHQEQGPGR) is disordered. Residue Cys-372 participates in Cu(+) binding. The segment at 460–487 (KMAPDTRGLPTHQGPGHSSETPSSPGAT) is disordered. Positions 475–487 (GHSSETPSSPGAT) are enriched in polar residues. A phosphoserine mark is found at Ser-478 and Ser-483. 2 HMA domains span residues 490–556 (QKCF…FEAS) and 566–632 (GDIE…FHAS). Cu(+)-binding residues include Cys-501, Cys-504, Cys-577, and Cys-580. The chain crosses the membrane as a helical span at residues 656-677 (FLCSLVFGIPVMGLMVYMLIPS). Residues 678-699 (STPQETMVLDHNIIPGLSVLNL) are Extracellular-facing. A helical membrane pass occupies residues 700 to 719 (IFFILCTFVQFLGGWYFYVQ). The Cytoplasmic portion of the chain corresponds to 720–726 (AYKSLRH). Residues 727 to 747 (RSANMDVLIVLATTIAYAYSL) form a helical membrane-spanning segment. Over 748-766 (VILVVAVAEKAEKSPVTFF) the chain is Extracellular. The chain crosses the membrane as a helical span at residues 767–787 (DTPPMLFVFIALGRWLEHVAK). The Cytoplasmic portion of the chain corresponds to 788-921 (SKTSEALAKL…KAPIQQLADR (134 aa)). Residues 922 to 944 (FSGYFVPFIIIISTLTLVVWIVI) form a helical membrane-spanning segment. Over 945 to 974 (GFVDFGVVQKYFPSPSKHISQTEVIIRFAF) the chain is Extracellular. Residues 975–996 (QTSITVLCIACPCSLGLATPTA) form a helical membrane-spanning segment. The Cytoplasmic portion of the chain corresponds to 997 to 1319 (VMVGTGVAAQ…LSKRTVRRIR (323 aa)). The active-site 4-aspartylphosphate intermediate is the Asp-1029. 2 residues coordinate Mg(2+): Asp-1264 and Asp-1268. Residues 1320 to 1337 (VNLVLALIYNMVGIPIAA) traverse the membrane as a helical segment. The Extracellular segment spans residues 1338-1348 (GVFMPIGIVLQ). The chain crosses the membrane as a helical span at residues 1349–1368 (PWMGSAAMAASSVSVVLSSL). At 1369–1462 (QLKCYRKPDL…LSDRDEEQCI (94 aa)) the chain is on the cytoplasmic side. Phosphoserine occurs at positions 1395 and 1454.

This sequence belongs to the cation transport ATPase (P-type) (TC 3.A.3) family. Type IB subfamily. In terms of assembly, monomer. Interacts with COMMD1/MURR1. Interacts with DCTN4, in a copper-dependent manner. Interacts with ATOX1. Interacts (via C-terminus) with ZBTB16/PLZF. As to expression, detected in liver and kidney.

It localises to the golgi apparatus. The protein localises to the trans-Golgi network membrane. The protein resides in the late endosome. The enzyme catalyses Cu(+)(in) + ATP + H2O = Cu(+)(out) + ADP + phosphate + H(+). In terms of biological role, copper ion transmembrane transporter involved in the export of copper out of the cells, such as the efflux of hepatic copper into the bile. The chain is Copper-transporting ATPase 2 (Atp7b) from Mus musculus (Mouse).